Reading from the N-terminus, the 477-residue chain is Phosphomethylpyrimidine synthase (477 aa).

Substrate-binding positions include Asn-67, Met-96, Tyr-125, His-160, 180–182 (SRG), 221–224 (DGLR), and Glu-260. His-264 provides a ligand contact to Zn(2+). Tyr-287 is a binding site for substrate. His-328 is a Zn(2+) binding site. Cys-408, Cys-411, and Cys-416 together coordinate [4Fe-4S] cluster. The segment covering 427–440 (AGDGMDGLESRTDL) has biased composition (basic and acidic residues). The tract at residues 427 to 477 (AGDGMDGLESRTDLDSSAAAAVNRPPTGVHRAEKLDDIPCPVAEDDVAADD) is disordered.

Belongs to the ThiC family. [4Fe-4S] cluster is required as a cofactor.

It catalyses the reaction 5-amino-1-(5-phospho-beta-D-ribosyl)imidazole + S-adenosyl-L-methionine = 4-amino-2-methyl-5-(phosphooxymethyl)pyrimidine + CO + 5'-deoxyadenosine + formate + L-methionine + 3 H(+). The protein operates within cofactor biosynthesis; thiamine diphosphate biosynthesis. Its function is as follows. Catalyzes the synthesis of the hydroxymethylpyrimidine phosphate (HMP-P) moiety of thiamine from aminoimidazole ribotide (AIR) in a radical S-adenosyl-L-methionine (SAM)-dependent reaction. The polypeptide is Phosphomethylpyrimidine synthase (Natronomonas pharaonis (strain ATCC 35678 / DSM 2160 / CIP 103997 / JCM 8858 / NBRC 14720 / NCIMB 2260 / Gabara) (Halobacterium pharaonis)).